The chain runs to 940 residues: UvrABC system protein A (940 aa).

An ATP-binding site is contributed by Gly31–Ser38. Residues Cys253–Cys280 form a C4-type zinc finger. ABC transporter domains are found at residues Trp310 to Leu587 and Ala607 to Lys937. Gly640–Ser647 is a binding site for ATP. The segment at Cys740–Cys766 adopts a C4-type zinc-finger fold.

It belongs to the ABC transporter superfamily. UvrA family. In terms of assembly, forms a heterotetramer with UvrB during the search for lesions.

It localises to the cytoplasm. In terms of biological role, the UvrABC repair system catalyzes the recognition and processing of DNA lesions. UvrA is an ATPase and a DNA-binding protein. A damage recognition complex composed of 2 UvrA and 2 UvrB subunits scans DNA for abnormalities. When the presence of a lesion has been verified by UvrB, the UvrA molecules dissociate. This Escherichia coli O6:H1 (strain CFT073 / ATCC 700928 / UPEC) protein is UvrABC system protein A.